A 652-amino-acid chain; its full sequence is Set1 complex component ash2 (652 aa).

The tract at residues 1 to 32 is disordered; that stretch reads MLAHGSNDYGVSLKGNKTGSSPSKASSLNWNE. Over residues 15–32 the composition is skewed to polar residues; it reads GNKTGSSPSKASSLNWNE. Residues 40–94 form a PHD-type zinc finger; sequence NTYCYCGKDRNLRFPDLQCSVCLNMFHLSCLSPPCTSMMGFSTNYQFVCKHCTED. Zn(2+)-binding residues include cysteine 43, cysteine 45, cysteine 58, cysteine 61, histidine 66, cysteine 69, cysteine 88, and cysteine 91. Residues 234–270 form a disordered region; the sequence is RLVETETPPPSSSKLKEDYKDSKREMKRSNTPWSNAS. Residues 247–261 are compositionally biased toward basic and acidic residues; sequence KLKEDYKDSKREMKR. One can recognise a B30.2/SPRY domain in the interval 330-519; the sequence is EAAKDLPNVM…KHNRYIDLPY (190 aa).

Belongs to the cclA family. As to quaternary structure, component of the Set1 complex composed of ash2, sdc1, set1, shg1, spp1, swd1, swd2 and swd3. Component of the Lid2 complex composed of ash2, jmj3, lid2, sdc1 and snt2.

It is found in the nucleus. Component of the COMPASS (Set1C) complex that specifically mono-, di- and trimethylates histone H3 to form H3K4me1/2/3, which subsequently plays a role in telomere length maintenance and transcription elongation regulation. Regulates MAPK pathway and sporulation through H3K4 methylation. This Schizosaccharomyces pombe (strain 972 / ATCC 24843) (Fission yeast) protein is Set1 complex component ash2.